Here is a 494-residue protein sequence, read N- to C-terminus: Uric acid degradation bifunctional protein PucL (494 aa).

Positions 1 to 174 are OHCU decarboxylase; the sequence is MFTMDDLNQM…EKGETQMKRT (174 aa). His-68 functions as the Proton donor; for OHCU decarboxylase activity in the catalytic mechanism. 5-hydroxy-2-oxo-4-ureido-2,5-dihydro-1H-imidazole-5-carboxylate is bound by residues Pro-69, 81–85, and 116–120; these read SVREQ and FILAV. A urate oxidase region spans residues 175-494; it reads MSYGKGNVFA…AAEKCRSLKA (320 aa). Lys-179 (charge relay system; for urate oxidase activity) is an active-site residue. The active-site Charge relay system is the Lys-190. Thr-239 functions as the Charge relay system; for urate oxidase activity in the catalytic mechanism. Residues Thr-239, Asp-240, Phe-349, Arg-366, Ile-414, Gln-415, and Asn-441 each coordinate urate.

It in the N-terminal section; belongs to the OHCU decarboxylase family. This sequence in the C-terminal section; belongs to the uricase family.

The enzyme catalyses 5-hydroxy-2-oxo-4-ureido-2,5-dihydro-1H-imidazole-5-carboxylate + H(+) = (S)-allantoin + CO2. The catalysed reaction is urate + O2 + H2O = 5-hydroxyisourate + H2O2. Its pathway is purine metabolism; urate degradation; (S)-allantoin from urate: step 1/3. The protein operates within purine metabolism; urate degradation; (S)-allantoin from urate: step 3/3. Catalyzes two steps in the degradation of uric acid, i.e. the oxidation of uric acid to 5-hydroxyisourate (HIU) and the stereoselective decarboxylation of 2-oxo-4-hydroxy-4-carboxy-5-ureidoimidazoline (OHCU) to (S)-allantoin. The polypeptide is Uric acid degradation bifunctional protein PucL (pucL) (Bacillus subtilis (strain 168)).